Reading from the N-terminus, the 71-residue chain is Small ribosomal subunit protein bS21 (71 aa).

Belongs to the bacterial ribosomal protein bS21 family.

The protein is Small ribosomal subunit protein bS21 of Shewanella piezotolerans (strain WP3 / JCM 13877).